Here is a 405-residue protein sequence, read N- to C-terminus: L-carnitine CoA-transferase (405 aa).

CoA is bound by residues Lys97 and Arg104. The Nucleophile role is filled by Asp169.

This sequence belongs to the CoA-transferase III family. CaiB subfamily. In terms of assembly, homodimer.

The protein resides in the cytoplasm. It carries out the reaction crotonobetainyl-CoA + (R)-carnitine = crotonobetaine + (R)-carnitinyl-CoA. The catalysed reaction is 4-(trimethylamino)butanoyl-CoA + (R)-carnitine = (R)-carnitinyl-CoA + 4-(trimethylamino)butanoate. It functions in the pathway amine and polyamine metabolism; carnitine metabolism. In terms of biological role, catalyzes the reversible transfer of the CoA moiety from gamma-butyrobetainyl-CoA to L-carnitine to generate L-carnitinyl-CoA and gamma-butyrobetaine. Is also able to catalyze the reversible transfer of the CoA moiety from gamma-butyrobetainyl-CoA or L-carnitinyl-CoA to crotonobetaine to generate crotonobetainyl-CoA. This chain is L-carnitine CoA-transferase, found in Salmonella enteritidis PT4 (strain P125109).